The primary structure comprises 318 residues: Taste receptor type 2 member 60 (318 aa).

Topologically, residues M1 to V7 are extracellular. Residues L8–C28 traverse the membrane as a helical segment. Topologically, residues L29 to A40 are cytoplasmic. A helical membrane pass occupies residues A41–S61. Residues L62 to P88 are Extracellular-facing. A helical transmembrane segment spans residues Y89–W109. Residues F110–P128 are Cytoplasmic-facing. A helical membrane pass occupies residues V129–V149. At G150–N183 the chain is on the extracellular side. 2 N-linked (GlcNAc...) asparagine glycosylation sites follow: N163 and N179. Residues S184 to M204 form a helical membrane-spanning segment. Residues P205 to F234 lie on the Cytoplasmic side of the membrane. The helical transmembrane segment at R235–L255 threads the bilayer. The Extracellular segment spans residues F256–V264. Residues L265 to I285 traverse the membrane as a helical segment. Residues Y286–P318 are Cytoplasmic-facing.

Belongs to the G-protein coupled receptor T2R family.

It is found in the membrane. Its function is as follows. Receptor that may play a role in the perception of bitterness and is gustducin-linked. May play a role in sensing the chemical composition of the gastrointestinal content. The activity of this receptor may stimulate alpha gustducin, mediate PLC-beta-2 activation and lead to the gating of TRPM5. This chain is Taste receptor type 2 member 60 (TAS2R60), found in Macaca mulatta (Rhesus macaque).